Reading from the N-terminus, the 1839-residue chain is MNGRIRQNQTAYNPYSTSGRNNRNTINSERDESENGSLLMNGSSSPPNNQQTNKAGFFKNMVSKLLSKPLQWMFSNFDESSSSSSSSSSSYDDGNNIPQKGSSTTTTNINNNNNNNNSNSNSNSNNNTNNQNNNSNNNNNNNNKINISDDYDSNLSKVKVPSGINFDTSSLSVADLTRSYQTNISNKNILDNKPILKKDQNPTTTTTTTTAAAVPKKSVAIGGVTNNDKKPTTTTTATTSILKTNINSLYPNLSQDRINANASTFNSSRNIKNNLSPTQTTLKITNNNTIYSNSQFKKKPISSTFNASPFESSIINSSSILSKRKQFDDNNNSNINDNQSIYNRQSIYSPNSKIEQPPLKKRLPNADGTDNSVMMATSQAAKRILEHLDSFSNPVLAHYNPSSTMAPSSQSLYNGNDSTYQPPTSVYRPKIKIPQISINYKYNPYGLSKLLEKKPKSNKDLGLEIPTNSITSSVSLYKKPLNKKSEDESTEPIKTYATPSTTTTTATVANTSSSSSSSSSSSSSSSSSSSSSSSSSSLFSSKPATISSNTTTTTTTSSPPSSSLFSTTSSAASTNTATASSLFSATPATTIATSSPSTSTSTSSSSSGNEKKLDNMFTSDSNKSNLFSKENDGGGVNPFKNLATTVSKTDFIGINGVSTSTSSSTSTSKSSPIAKKDITSINKSAPYEKKKRGLENEDTPLDVPGLKNIEPPSGLFNFSGIKPIETTLFSVSTTTPLATTTTASSSSSSSLFSSPPTTDKSSADKSSADKSSTDKSTSPVTTSIPSFTSSSTSTSLFGPTTTTTDKDSKTASIFSTKPTTEGLFSKPTTSLTSSSLFSSTITTATTTPSIFGDASKSSTSTSLFGSSNTTTAKPPASFGVNLSAAPKKSSPPPPPESDEEDEENEGDEGDEEGDENGELEAEEAFYVPPDSDEENEGDGNGGDLEAEEEFYVPPDSDEEKEKEKKPKTKQQSTQLTGLFAAPPKGGSLFGNTPTGGSLFGSAPTGSSLFSGGSLLTSSFLTKKGENDDDSSDEDSNKKRKKKRESSSSSSTSSNIIIPTTSKKEKIDDKPSTTTTTTTTSLFGSTTTSGLFSNPSTTSTGSLFSSNPLGSTASTSSLFGASTLASTATTTATPTTSLFGSTTPSSSSSSSSSSSSTTSTTTPSNSLFGTSSSSSSTSSSLFGSTTSATTPSSLFGTTTTSSDSKSETKTTPSLSSGGLFSTTSASPFSIPSSTSSSGLFGSTNQTESKVATTTTTAATTATPSTSLFGSTTTPSTSSSTSSLTTTPSTGLFGASSSTTPSTGLFGSATTPSTGLFGASSSSSSSSISSSSTTSTTTTPSTGLFGSTTPSTGLFGSTTTAATTTPSTGLFGSTPSSTTSTTTTPPNGLFGSTTPSTALFGTSTPATTSTLTTSTSTTPSTGLFGSSSSIATTTPSTGLFGSTSSSTTNTAPSTGLFGSTTTSTTATPFGSSSSTPSTGLFGSSSSSTSSSLSSSSTTATQPTGLFGSTAPSTGLFGSTTATNPSTGLFGSTTTTSTTTTPSTGLFGSSSSTPSSTGLFGSSSSTTSSTTTPSTGLFGSAAPSTSSPFSIPTSSTPATSNPFGSNPFPTSSPTTVSSTPSSNPFGAPSLSNSTSSSSLFGAPTTSTAATTTPSFGSSPFGAPSSTSSTPFGASPFGAPTSTSSPPFGAPTSASSTPFGAPQISTSSSTNLFGGASSSTAAPSFVSSPFGAPITSSSSSSSSSLPFGAPTTSSSSSTPFGASPFGNSMASTTSPFGAPAASPSPFGIQAASPSPFGAPAASPSPFGSTPSTAPNPFGNFGAVPANGFSLGKMGTSKKPAKKK.

Polar residues-rich tracts occupy residues 1–27 (MNGR…NTIN) and 35–54 (NGSL…QTNK). Disordered regions lie at residues 1–54 (MNGR…QTNK), 78–150 (DESS…ISDD), 325–367 (KQFD…PNAD), 480–568 (PLNK…FSTT), 589–636 (TTIA…GGGV), 657–705 (VSTS…DVPG), 739–810 (TTTT…DSKT), 818–837 (PTTE…SSLF), 846–1106 (TTPS…FSSN), and 1129–1839 (TTAT…AKKK). Low complexity predominate over residues 80–90 (SSSSSSSSSSS). The span at 91–101 (YDDGNNIPQKG) shows a compositional bias: polar residues. 2 stretches are compositionally biased toward low complexity: residues 102-148 (SSTT…INIS) and 329-343 (DNNN…SIYN). The span at 344–354 (RQSIYSPNSKI) shows a compositional bias: polar residues. Composition is skewed to low complexity over residues 495–568 (TYAT…FSTT) and 589–607 (TTIA…SSSS). The segment covering 616-628 (MFTSDSNKSNLFS) has biased composition (polar residues). 2 stretches are compositionally biased toward low complexity: residues 658–671 (STST…SKSS) and 739–760 (TTTT…TTDK). Residues 761–773 (SSADKSSADKSST) are compositionally biased toward basic and acidic residues. 3 stretches are compositionally biased toward low complexity: residues 774-803 (DKST…TTTT), 827-837 (PTTSLTSSSLF), and 846-871 (TTPS…NTTT). Composition is skewed to acidic residues over residues 896-923 (ESDE…EAEE) and 944-958 (LEAE…DSDE). 2 stretches are compositionally biased toward low complexity: residues 1005–1021 (GSSL…SFLT) and 1046–1060 (SSSS…IPTT). The span at 1061 to 1070 (SKKEKIDDKP) shows a compositional bias: basic and acidic residues. Residues 1071–1092 (STTTTTTTTSLFGSTTTSGLFS) are compositionally biased toward low complexity. Residues 1093-1106 (NPSTTSTGSLFSSN) show a composition bias toward polar residues. Low complexity-rich tracts occupy residues 1129-1242 (TTAT…FGST) and 1250-1292 (ATTT…GLFG). Residues 1293–1310 (ASSSTTPSTGLFGSATTP) show a composition bias toward polar residues. Composition is skewed to low complexity over residues 1311–1384 (STGL…TTPP) and 1397–1498 (LFGT…TTAT). A compositionally biased stretch (polar residues) spans 1507-1521 (TAPSTGLFGSTTATN). Residues 1522 to 1673 (PSTGLFGSTT…SSTPFGASPF (152 aa)) show a composition bias toward low complexity. Residues 1676–1708 (PTSTSSPPFGAPTSASSTPFGAPQISTSSSTNL) show a composition bias toward polar residues. Residues 1712 to 1810 (ASSSTAAPSF…PFGSTPSTAP (99 aa)) are compositionally biased toward low complexity.

This chain is Nuclear pore complex protein DDB_G0274915, found in Dictyostelium discoideum (Social amoeba).